The chain runs to 737 residues: tRNA-dihydrouridine(47) synthase [NAD(P)(+)] (737 aa).

2 stretches are compositionally biased toward basic and acidic residues: residues 1 to 11 (MESQETAKRPI) and 24 to 33 (PATKRVKLDD). Positions 1–127 (MESQETAKRP…GKKKRPKGQN (127 aa)) are disordered. A compositionally biased stretch (low complexity) spans 35-44 (PVPQIQEEPS). Residues 57 to 82 (EDEKPTEQRQDDRDKRRGIAPIKKEY) show a composition bias toward basic and acidic residues. 2 C3H1-type zinc fingers span residues 142–166 (CNSV…NALH) and 187–208 (CPVW…VESH). Residues 332-334 (PLT) and Gln-407 contribute to the FMN site. Residue Cys-439 is the Proton donor of the active site. Residues Lys-479, His-520, 577 to 579 (NGD), and 601 to 602 (GR) each bind FMN.

Belongs to the Dus family. Dus3 subfamily. The cofactor is FMN.

It localises to the cytoplasm. The protein localises to the nucleus. The catalysed reaction is 5,6-dihydrouridine(47) in tRNA + NAD(+) = uridine(47) in tRNA + NADH + H(+). It carries out the reaction 5,6-dihydrouridine(47) in tRNA + NADP(+) = uridine(47) in tRNA + NADPH + H(+). The enzyme catalyses a 5,6-dihydrouridine in mRNA + NAD(+) = a uridine in mRNA + NADH + H(+). It catalyses the reaction a 5,6-dihydrouridine in mRNA + NADP(+) = a uridine in mRNA + NADPH + H(+). Catalyzes the synthesis of dihydrouridine, a modified base found in the D-loop of most tRNAs. Specifically modifies U47 in cytoplasmic tRNAs. Catalyzes the synthesis of dihydrouridine in some mRNAs, thereby affecting their translation. The sequence is that of tRNA-dihydrouridine(47) synthase [NAD(P)(+)] (dus-3) from Neurospora crassa (strain ATCC 24698 / 74-OR23-1A / CBS 708.71 / DSM 1257 / FGSC 987).